The sequence spans 473 residues: Photosystem II CP43 reaction center protein (473 aa).

Positions 1-14 (MKTLYSPRRYYPVE) are excised as a propeptide. Position 15 is an N-acetylthreonine (Thr-15). Thr-15 bears the Phosphothreonine mark. 5 helical membrane-spanning segments follow: residues 69-93 (LFEV…PHLA), 134-155 (IIGP…KDKN), 178-200 (KAVW…RVIT), 255-275 (KPFA…LSYS), and 291-312 (WFNN…ASQA). Glu-367 provides a ligand contact to [CaMn4O5] cluster. The helical transmembrane segment at 447-471 (RARAAAAGFEKGIERETEPVLFMSP) threads the bilayer.

This sequence belongs to the PsbB/PsbC family. PsbC subfamily. As to quaternary structure, PSII is composed of 1 copy each of membrane proteins PsbA, PsbB, PsbC, PsbD, PsbE, PsbF, PsbH, PsbI, PsbJ, PsbK, PsbL, PsbM, PsbT, PsbX, PsbY, PsbZ, Psb30/Ycf12, at least 3 peripheral proteins of the oxygen-evolving complex and a large number of cofactors. It forms dimeric complexes. The cofactor is Binds multiple chlorophylls and provides some of the ligands for the Ca-4Mn-5O cluster of the oxygen-evolving complex. It may also provide a ligand for a Cl- that is required for oxygen evolution. PSII binds additional chlorophylls, carotenoids and specific lipids..

The protein resides in the plastid. The protein localises to the chloroplast thylakoid membrane. Its function is as follows. One of the components of the core complex of photosystem II (PSII). It binds chlorophyll and helps catalyze the primary light-induced photochemical processes of PSII. PSII is a light-driven water:plastoquinone oxidoreductase, using light energy to abstract electrons from H(2)O, generating O(2) and a proton gradient subsequently used for ATP formation. The chain is Photosystem II CP43 reaction center protein from Chaetosphaeridium globosum (Charophycean green alga).